Consider the following 625-residue polypeptide: Zinc finger protein 652-A (625 aa).

The interval 80–255 (FFRDSKPINE…PSDKAKSEEK (176 aa)) is disordered. Residues 82 to 100 (RDSKPINEVHSVKGERENS) are compositionally biased toward basic and acidic residues. The segment covering 101–127 (GESEEEEDDDDDDDDEDDEEGEEDEDE) has biased composition (acidic residues). Basic and acidic residues predominate over residues 150 to 166 (KGDKGVAQDSSHIKTSS). A compositionally biased stretch (acidic residues) spans 167-186 (DDEEGDSGEDDQDSHEDEEN). Over residues 240 to 255 (PKEPKSPSDKAKSEEK) the composition is skewed to basic and acidic residues. The C2H2-type 1 zinc finger occupies 258–281 (LTCDKCPRVFNTRWYLEKHMNVTH). The C2H2-type 2; degenerate zinc-finger motif lies at 285–307 (QICDKCGKKFVLESELSLHLQTD). C2H2-type zinc fingers lie at residues 312-335 (IQCI…KIVH), 342-364 (FSCE…LVAH), 370-392 (FTCE…SLQH), 398-420 (FRCE…MSIH), 426-448 (FMCQ…MKTH), and 454-476 (FICE…RRTH). The C2H2-type 9; degenerate zinc finger occupies 482-505 (YPCDVCGMRFRFSNMLKAHKEKCF).

It belongs to the krueppel C2H2-type zinc-finger protein family.

The protein resides in the nucleus. Functionally, may be involved in transcriptional regulation. The sequence is that of Zinc finger protein 652-A (znf652-a) from Xenopus laevis (African clawed frog).